Consider the following 212-residue polypeptide: uncharacterized protein (212 aa).

Residues 87-105 (NNNNNNNNNNNHNHNNSNN) are compositionally biased toward low complexity. The segment at 87–107 (NNNNNNNNNNNHNHNNSNNTA) is disordered.

This is an uncharacterized protein from Saccharomyces cerevisiae (strain ATCC 204508 / S288c) (Baker's yeast).